We begin with the raw amino-acid sequence, 617 residues long: pH-sensitive chloride channel 2 (617 aa).

Positions 1-28 (MHSPGAAAYVFLQCLVALVAAVIAQSGA) are cleaved as a signal peptide. Residues 29–387 (DQPPTTVVEV…VHLAREMGFY (359 aa)) are Extracellular-facing. Asn-57 is a glycosylation site (N-linked (GlcNAc...) asparagine). The segment covering 82–96 (TVSVDSSSTTTVAST) has biased composition (low complexity). The segment at 82–110 (TVSVDSSSTTTVASTQEPTSTTERTMSPE) is disordered. Over residues 97 to 106 (QEPTSTTERT) the composition is skewed to polar residues. A glycan (N-linked (GlcNAc...) asparagine) is linked at Asn-130. Residues 131–147 (ATDDNRPDAKSSGKDSE) show a composition bias toward basic and acidic residues. Positions 131–155 (ATDDNRPDAKSSGKDSECPTLEGAD) are disordered. 4 N-linked (GlcNAc...) asparagine glycosylation sites follow: Asn-184, Asn-234, Asn-351, and Asn-370. A helical membrane pass occupies residues 388 to 408 (MMDYFIPSIMLVAISWVTFWL). At 409-414 (QADQSA) the chain is on the cytoplasmic side. Residues 415–434 (PRITLGTSTMLTFITLASAQ) form a helical membrane-spanning segment. The Extracellular segment spans residues 435–447 (GKTLPKVSYIKAS). A helical transmembrane segment spans residues 448 to 468 (EIWFLGCTGFIFGSLVEFAFV). At 469 to 596 (NTIWRRKRNV…VAIWIDKRSR (128 aa)) the chain is on the cytoplasmic side. A helical transmembrane segment spans residues 597–617 (FVFPIAFVIFNIFYWTFVYYV).

It belongs to the ligand-gated ion channel (TC 1.A.9) family.

The protein localises to the cell membrane. It catalyses the reaction chloride(in) = chloride(out). Functionally, ligand and pH-gated channel that mediates chloride transport in the mid-gut and thereby may function in larval metabolism and fluid homeostasis. Channel opening is triggered by zinc binding or, to a lesser extent, an increase in extracellular pH. The protein is pH-sensitive chloride channel 2 of Anopheles gambiae (African malaria mosquito).